Reading from the N-terminus, the 507-residue chain is ATP synthase subunit alpha, chloroplastic (507 aa).

ATP is bound at residue G170–T177.

The protein belongs to the ATPase alpha/beta chains family. F-type ATPases have 2 components, CF(1) - the catalytic core - and CF(0) - the membrane proton channel. CF(1) has five subunits: alpha(3), beta(3), gamma(1), delta(1), epsilon(1). CF(0) has four main subunits: a, b, b' and c.

The protein resides in the plastid. Its subcellular location is the chloroplast thylakoid membrane. It carries out the reaction ATP + H2O + 4 H(+)(in) = ADP + phosphate + 5 H(+)(out). Produces ATP from ADP in the presence of a proton gradient across the membrane. The alpha chain is a regulatory subunit. This chain is ATP synthase subunit alpha, chloroplastic, found in Gossypium hirsutum (Upland cotton).